Here is a 56-residue protein sequence, read N- to C-terminus: Large ribosomal subunit protein bL32 (56 aa).

The interval 1–35 (MAVQQNKSTRSKRGMRRSHHALRSVTISVDRTSGE) is disordered. Positions 9 to 22 (TRSKRGMRRSHHAL) are enriched in basic residues.

The protein belongs to the bacterial ribosomal protein bL32 family.

The polypeptide is Large ribosomal subunit protein bL32 (Blochmanniella pennsylvanica (strain BPEN)).